We begin with the raw amino-acid sequence, 564 residues long: Dihydroxy-acid dehydratase (564 aa).

D80 is a binding site for Mg(2+). Residue C121 coordinates [2Fe-2S] cluster. 2 residues coordinate Mg(2+): D122 and K123. An N6-carboxylysine modification is found at K123. Residue C194 coordinates [2Fe-2S] cluster. E447 provides a ligand contact to Mg(2+). S473 functions as the Proton acceptor in the catalytic mechanism.

The protein belongs to the IlvD/Edd family. As to quaternary structure, homodimer. [2Fe-2S] cluster serves as cofactor. Mg(2+) is required as a cofactor.

It catalyses the reaction (2R)-2,3-dihydroxy-3-methylbutanoate = 3-methyl-2-oxobutanoate + H2O. The enzyme catalyses (2R,3R)-2,3-dihydroxy-3-methylpentanoate = (S)-3-methyl-2-oxopentanoate + H2O. It participates in amino-acid biosynthesis; L-isoleucine biosynthesis; L-isoleucine from 2-oxobutanoate: step 3/4. It functions in the pathway amino-acid biosynthesis; L-valine biosynthesis; L-valine from pyruvate: step 3/4. Functionally, functions in the biosynthesis of branched-chain amino acids. Catalyzes the dehydration of (2R,3R)-2,3-dihydroxy-3-methylpentanoate (2,3-dihydroxy-3-methylvalerate) into 2-oxo-3-methylpentanoate (2-oxo-3-methylvalerate) and of (2R)-2,3-dihydroxy-3-methylbutanoate (2,3-dihydroxyisovalerate) into 2-oxo-3-methylbutanoate (2-oxoisovalerate), the penultimate precursor to L-isoleucine and L-valine, respectively. The chain is Dihydroxy-acid dehydratase from Listeria monocytogenes serotype 4a (strain HCC23).